The chain runs to 73 residues: Translation initiation factor IF-1 (73 aa).

One can recognise an S1-like domain in the interval 1–73; sequence MAKKDGVIEI…NRGRIVYRYR (73 aa).

The protein belongs to the IF-1 family. Component of the 30S ribosomal translation pre-initiation complex which assembles on the 30S ribosome in the order IF-2 and IF-3, IF-1 and N-formylmethionyl-tRNA(fMet); mRNA recruitment can occur at any time during PIC assembly.

It is found in the cytoplasm. Its function is as follows. One of the essential components for the initiation of protein synthesis. Stabilizes the binding of IF-2 and IF-3 on the 30S subunit to which N-formylmethionyl-tRNA(fMet) subsequently binds. Helps modulate mRNA selection, yielding the 30S pre-initiation complex (PIC). Upon addition of the 50S ribosomal subunit IF-1, IF-2 and IF-3 are released leaving the mature 70S translation initiation complex. In Acidothermus cellulolyticus (strain ATCC 43068 / DSM 8971 / 11B), this protein is Translation initiation factor IF-1.